The following is a 439-amino-acid chain: GTPase Der (439 aa).

EngA-type G domains are found at residues 2 to 166 (SVVA…PAPA) and 176 to 351 (TRLA…IEFN). Residues 8–15 (GRPNVGKS), 55–59 (DTGGF), 118–121 (NKVD), 182–189 (GRPNVGKS), 229–233 (DTAGI), and 294–297 (NKWD) each bind GTP. A KH-like domain is found at 352–436 (RQVPTGVLNR…PIRLKFKDRN (85 aa)).

It belongs to the TRAFAC class TrmE-Era-EngA-EngB-Septin-like GTPase superfamily. EngA (Der) GTPase family. In terms of assembly, associates with the 50S ribosomal subunit.

Functionally, GTPase that plays an essential role in the late steps of ribosome biogenesis. The chain is GTPase Der from Syntrophotalea carbinolica (strain DSM 2380 / NBRC 103641 / GraBd1) (Pelobacter carbinolicus).